The primary structure comprises 349 residues: Isopentenyl-diphosphate delta-isomerase (349 aa).

6-7 (RK) serves as a coordination point for substrate. FMN contacts are provided by residues 62–64 (AMT), S93, and N122. Q152 is a binding site for substrate. E153 contacts Mg(2+). FMN contacts are provided by residues K184, T214, 258–259 (GG), and 280–281 (AG).

The protein belongs to the IPP isomerase type 2 family. As to quaternary structure, homooctamer. Dimer of tetramers. Requires FMN as cofactor. NADPH is required as a cofactor. The cofactor is Mg(2+).

The protein resides in the cytoplasm. The catalysed reaction is isopentenyl diphosphate = dimethylallyl diphosphate. Functionally, involved in the biosynthesis of isoprenoids. Catalyzes the 1,3-allylic rearrangement of the homoallylic substrate isopentenyl (IPP) to its allylic isomer, dimethylallyl diphosphate (DMAPP). The chain is Isopentenyl-diphosphate delta-isomerase from Bacillus mycoides (strain KBAB4) (Bacillus weihenstephanensis).